The chain runs to 300 residues: MDNNEELEIVHTPVMLKEVLSFIPENAKIAVDATLGEGGHTKAMLDLNLEVHSFERDSAILEIAKKRLKNYDKFHYYNNTYDKMIEELDDSIIGNVDFMLYDLGVSLFHFKKAERGFSFKDNVRLDMRLGLNEKSAYDVINGYSEEELERVLRDYGEISNARKMANVIVKERNRRKIETSRELENIIFHNTDKSQRYGKIHPATLVFQAIRIEVNDELNILEKSISNIPSILKQNGVVVVMSYHSLEDRIIKKFFKENEKTKNKDGIFKLLNNKVKLPTNEEIKSNPASRSAKMRIAQKV.

S-adenosyl-L-methionine is bound by residues 38-40 (GGH), Glu-55, Ile-85, Asp-102, and His-109.

This sequence belongs to the methyltransferase superfamily. RsmH family.

It is found in the cytoplasm. It carries out the reaction cytidine(1402) in 16S rRNA + S-adenosyl-L-methionine = N(4)-methylcytidine(1402) in 16S rRNA + S-adenosyl-L-homocysteine + H(+). Specifically methylates the N4 position of cytidine in position 1402 (C1402) of 16S rRNA. This Brachyspira hyodysenteriae (strain ATCC 49526 / WA1) protein is Ribosomal RNA small subunit methyltransferase H.